The following is a 203-amino-acid chain: 3-isopropylmalate dehydratase small subunit (203 aa).

This sequence belongs to the LeuD family. LeuD type 1 subfamily. In terms of assembly, heterodimer of LeuC and LeuD.

It carries out the reaction (2R,3S)-3-isopropylmalate = (2S)-2-isopropylmalate. It participates in amino-acid biosynthesis; L-leucine biosynthesis; L-leucine from 3-methyl-2-oxobutanoate: step 2/4. In terms of biological role, catalyzes the isomerization between 2-isopropylmalate and 3-isopropylmalate, via the formation of 2-isopropylmaleate. In Symbiobacterium thermophilum (strain DSM 24528 / JCM 14929 / IAM 14863 / T), this protein is 3-isopropylmalate dehydratase small subunit.